A 151-amino-acid chain; its full sequence is Mini-ribonuclease 3 (151 aa).

Aspartate 30 is an active-site residue.

It belongs to the MrnC RNase family. Homodimer. The cofactor is Mg(2+).

It localises to the cytoplasm. Involved in correct processing of both the 5' and 3' ends of 23S rRNA precursor. Processes 30S rRNA precursor transcript even in absence of ribonuclease 3 (Rnc); Rnc processes 30S rRNA into smaller rRNA precursors. This Thermosynechococcus vestitus (strain NIES-2133 / IAM M-273 / BP-1) protein is Mini-ribonuclease 3.